Reading from the N-terminus, the 250-residue chain is 5-oxoprolinase subunit A (250 aa).

This sequence belongs to the LamB/PxpA family. In terms of assembly, forms a complex composed of PxpA, PxpB and PxpC.

It carries out the reaction 5-oxo-L-proline + ATP + 2 H2O = L-glutamate + ADP + phosphate + H(+). Its function is as follows. Catalyzes the cleavage of 5-oxoproline to form L-glutamate coupled to the hydrolysis of ATP to ADP and inorganic phosphate. The polypeptide is 5-oxoprolinase subunit A (Staphylococcus haemolyticus (strain JCSC1435)).